Consider the following 418-residue polypeptide: NADH-quinone oxidoreductase subunit D (418 aa).

This sequence belongs to the complex I 49 kDa subunit family. As to quaternary structure, NDH-1 is composed of 14 different subunits. Subunits NuoB, C, D, E, F, and G constitute the peripheral sector of the complex.

The protein resides in the cell inner membrane. The enzyme catalyses a quinone + NADH + 5 H(+)(in) = a quinol + NAD(+) + 4 H(+)(out). In terms of biological role, NDH-1 shuttles electrons from NADH, via FMN and iron-sulfur (Fe-S) centers, to quinones in the respiratory chain. The immediate electron acceptor for the enzyme in this species is believed to be ubiquinone. Couples the redox reaction to proton translocation (for every two electrons transferred, four hydrogen ions are translocated across the cytoplasmic membrane), and thus conserves the redox energy in a proton gradient. The protein is NADH-quinone oxidoreductase subunit D of Bordetella bronchiseptica (strain ATCC BAA-588 / NCTC 13252 / RB50) (Alcaligenes bronchisepticus).